The primary structure comprises 186 residues: Peptidoglycan-recognition protein SD (186 aa).

A signal peptide spans 1–18; that stretch reads MTWIGLLIVGLTAIAVQG. In terms of domain architecture, N-acetylmuramoyl-L-alanine amidase spans 47–169; the sequence is AVIAHTAGGA…RQVSATKSPG (123 aa). Cys-57 and Cys-63 are joined by a disulfide. A glycan (N-linked (GlcNAc...) asparagine) is linked at Asn-181.

Belongs to the N-acetylmuramoyl-L-alanine amidase 2 family. In larvae, it is mainly expressed in fat body. Also expressed in uninduced hemocytes and mbn-2 cells.

The protein localises to the secreted. In terms of biological role, peptidoglycan-recognition protein that plays a key role in innate immunity by binding to peptidoglycans (PGN) of Gram-positive bacteria and activating the Toll pathway. Has no activity against on Gram-negative bacteria and fungi. Shows some partial redundancy with PRPGP-SA in Gram-positive bacteria recognition. May act by activating the proteolytic cleavage of Spatzle and the subsequent activation of Toll pathway. Recognizes S.aureus PGN. The protein is Peptidoglycan-recognition protein SD (PGRP-SD) of Drosophila melanogaster (Fruit fly).